The primary structure comprises 207 residues: Intraflagellar transport protein 43 homolog A (207 aa).

The disordered stretch occupies residues 1–104; that stretch reads MDDNLQLGDS…GSDDEGDIPV (104 aa).

Belongs to the IFT43 family. In terms of assembly, component of IFT complex A.

Functionally, component of IFT complex A (IFT-A) involved in retrograde ciliary transport along microtubules from the ciliary tip to the base. This Salmo salar (Atlantic salmon) protein is Intraflagellar transport protein 43 homolog A (ift43a).